The chain runs to 295 residues: Acetylglutamate kinase (295 aa).

Residues 66 to 67 (GG), arginine 88, and asparagine 193 each bind substrate.

It belongs to the acetylglutamate kinase family. ArgB subfamily.

Its subcellular location is the cytoplasm. It carries out the reaction N-acetyl-L-glutamate + ATP = N-acetyl-L-glutamyl 5-phosphate + ADP. The protein operates within amino-acid biosynthesis; L-arginine biosynthesis; N(2)-acetyl-L-ornithine from L-glutamate: step 2/4. Its function is as follows. Catalyzes the ATP-dependent phosphorylation of N-acetyl-L-glutamate. The chain is Acetylglutamate kinase from Sinorhizobium medicae (strain WSM419) (Ensifer medicae).